Reading from the N-terminus, the 396-residue chain is Alanine racemase (396 aa).

K46 functions as the Proton acceptor; specific for D-alanine in the catalytic mechanism. K46 carries the N6-(pyridoxal phosphate)lysine modification. Position 145 (R145) interacts with substrate. Residue Y280 is the Proton acceptor; specific for L-alanine of the active site. M328 contributes to the substrate binding site.

It belongs to the alanine racemase family. The cofactor is pyridoxal 5'-phosphate.

It catalyses the reaction L-alanine = D-alanine. It participates in amino-acid biosynthesis; D-alanine biosynthesis; D-alanine from L-alanine: step 1/1. Functionally, catalyzes the interconversion of L-alanine and D-alanine. May also act on other amino acids. This is Alanine racemase (alr) from Brucella ovis (strain ATCC 25840 / 63/290 / NCTC 10512).